Reading from the N-terminus, the 143-residue chain is uncharacterized protein (143 aa).

An N-terminal signal peptide occupies residues 1–27 (MSDEIARLVADVFELAGLLRRSGEVVA).

This is an uncharacterized protein from Mycobacterium tuberculosis (strain CDC 1551 / Oshkosh).